Consider the following 494-residue polypeptide: Glucose-6-phosphate exchanger SLC37A2 (494 aa).

A helical transmembrane segment spans residues 20–37 (YRFSILFLTFVFYTSYHL). N-linked (GlcNAc...) asparagine glycans are attached at residues Asn52, Asn63, and Asn67. The next 11 membrane-spanning stretches (helical) occupy residues 85–105 (FGVLDNCFLVAYAVGMFFSGI), 116–136 (LSTGMLLSGLFTALFGLGFYW), 146–166 (LVQALNGLVQTTGWPAVVACV), 187–207 (SVGNILGSLIAGVYVSSAWGL), 208–228 (SFIVPGIIIASTGVICFLFLV), 295–315 (LCLLFAKLVSYTFLYWLPLYI), 327–347 (GDLSTLFDVGGILGGIVAGLV), 355–375 (ASTCCAMLIIAAPMLFLYNKI), 384–404 (VGMLLWCGALVNGPYALITTA), 427–447 (AIIDGTGSIGAAVGPLLAGLI), and 455–475 (VFYMLIAADVLACLLLSRLVY).

This sequence belongs to the major facilitator superfamily. Organophosphate:Pi antiporter (OPA) (TC 2.A.1.4) family.

Its subcellular location is the endoplasmic reticulum membrane. It catalyses the reaction D-glucose 6-phosphate(in) + phosphate(out) = D-glucose 6-phosphate(out) + phosphate(in). Its function is as follows. Inorganic phosphate and glucose-6-phosphate antiporter. May transport cytoplasmic glucose-6-phosphate into the lumen of the endoplasmic reticulum and translocate inorganic phosphate into the opposite direction. The protein is Glucose-6-phosphate exchanger SLC37A2 of Danio rerio (Zebrafish).